Consider the following 316-residue polypeptide: MTQGKLSVANKAPGTEGQQQVHGEKKEAPAVPSAPPSYEEATSGEGMKAGAFPPAPTAVPLHPSWAYVDPSSSSSYDNGFPTGDHELFTTFSWDDQKVRRVFVRKVYTILLIQLLVTLAVVALFTFCDPVKDYVQANPGWYWASYAVFFATYLTLACCSGPRRHFPWNLILLTVFTLSMAYLTGMLSSYYNTTSVLLCLGITALVCLSVTVFSFQTKFDFTSCQGVLFVLLMTLFFSGLILAILLPFQYVPWLHAVYAALGAGVFTLFLALDTQLLMGNRRHSLSPEEYIFGALNIYLDIIYIFTFFLQLFGTNRE.

The tract at residues 1-53 (MTQGKLSVANKAPGTEGQQQVHGEKKEAPAVPSAPPSYEEATSGEGMKAGAFP) is disordered. 3 consecutive transmembrane segments (helical) span residues 106–126 (VYTILLIQLLVTLAVVALFTF), 138–158 (PGWYWASYAVFFATYLTLACC), and 165–185 (FPWNLILLTVFTLSMAYLTGM). The N-linked (GlcNAc...) asparagine glycan is linked to Asn-191. Helical transmembrane passes span 194-214 (SVLLCLGITALVCLSVTVFSF), 225-245 (GVLFVLLMTLFFSGLILAILL), 250-270 (VPWLHAVYAALGAGVFTLFLA), and 290-310 (IFGALNIYLDIIYIFTFFLQL).

The protein belongs to the BI1 family. LFG subfamily. Interacts with FAS/TNFRSF6 and BAX. In terms of tissue distribution, highly expressed in breast carcinoma tissues. Enhanced expression correlates with the grade of the tumor (grade II/grade III) in primary breast tumors (at protein level). Widely expressed. Expressed at high levels in the brain especially in the hippocampus.

It localises to the cell membrane. It is found in the membrane raft. Its subcellular location is the postsynaptic cell membrane. Antiapoptotic protein which protects cells uniquely from Fas-induced apoptosis. Regulates Fas-mediated apoptosis in neurons by interfering with caspase-8 activation. May play a role in cerebellar development by affecting cerebellar size, internal granular layer (IGL) thickness, and Purkinje cell (PC) development. This chain is Protein lifeguard 2 (FAIM2), found in Homo sapiens (Human).